The sequence spans 938 residues: E3 ubiquitin-protein ligase CBL-B (938 aa).

Residues 35–167 (PPKQAAADRR…KAIFPNGQFQ (133 aa)) form a 4H region. In terms of domain architecture, Cbl-PTB spans 35 to 343 (PPKQAAADRR…GRSYNPDLTG (309 aa)). Residues 168–240 (GDNFRITKAD…FEFDIFTRLF (73 aa)) are EF-hand-like. The Ca(2+) site is built by Asp-221, Thr-223, Asn-225, Tyr-227, and Glu-232. Residues 241-343 (QPWGSILRNW…GRSYNPDLTG (103 aa)) are SH2-like. Ser-282 is subject to Phosphoserine; by PKC/PRKCQ. Arg-286 is a 4-O-phospho-L-tyrosine binding site. Positions 344–372 (LCEPTPHDHIKVTQEQYELYCEMGSTFQL) are linker. Tyr-363 is modified (phosphotyrosine). An RING-type zinc finger spans residues 373–412 (CKICAENDKDVKIEPCGHLMCTSCLTAWQESDGQGCPFCR). The segment at 465–588 (ASVRKCTDRQ…SVPSRDQPMP (124 aa)) is disordered. Polar residues predominate over residues 473–486 (RQNSPVTSPGSSPL). 6 positions are modified to phosphoserine: Ser-476, Ser-480, Ser-484, Ser-521, Ser-525, and Ser-529. The segment at 543-567 (PLPAPPPPLRDPPPPPERPPPIPPD) is interaction with VAV1. Residues 544–566 (LPAPPPPLRDPPPPPERPPPIPP) are compositionally biased toward pro residues. At Ser-633 the chain carries Phosphoserine. Tyr-664 and Tyr-708 each carry phosphotyrosine. Disordered regions lie at residues 702–725 (EEDD…PSHC) and 771–885 (DALP…EAAL). Polar residues predominate over residues 714 to 724 (HPVSLNSQPSH). Pro residues predominate over residues 775–784 (PSLPPPPPPA). Residues 794-804 (PPGSSSRPSSG) show a composition bias toward low complexity. Polar residues predominate over residues 839-855 (NRASQDYDQLPSSSDGS). A Phosphotyrosine modification is found at Tyr-845. Residues 847–883 (QLPSSSDGSQAPARPPKPRPRRTAPEIHHRKPHGPEA) form an interaction with SH3KBP1 region. The span at 862–878 (PKPRPRRTAPEIHHRKP) shows a compositional bias: basic residues. A UBA domain is found at 887 to 926 (NVDAKIAKLMGEGYAFEEVKRALEIAQNNLEVARSILREF).

Interacts with SH3 domain-containing proteins LCK, CRK and SORBS1. Interacts with LCP2 and ZAP70. Interacts with CBL. Interacts with SH3 domain-containing proteins VAV1, FYN, FGR, PLCG1, GRB2, CRKL, PIK3R1 and SH3KBP1/CIN85. Identified in heterotrimeric complexes with SH3KBP1/CIN85, CD2AP and ARHGEF7, where one CBLB peptide binds two copies of the other protein. Interacts with poly-ubiquitinated proteins. Dimerization is required for the binding of poly-ubiquitin, but not for the binding of mono-ubiquitin. Interacts with EGFR (phosphorylated). Interacts with IFT20. Post-translationally, phosphorylated on tyrosine and serine residues upon TCR or BCR activation, and upon various types of cell stimulation. In terms of processing, auto-ubiquitinated upon EGF-mediated cell activation or upon T-cell costimulation by CD28; which promotes proteasomal degradation.

It is found in the cytoplasm. It catalyses the reaction S-ubiquitinyl-[E2 ubiquitin-conjugating enzyme]-L-cysteine + [acceptor protein]-L-lysine = [E2 ubiquitin-conjugating enzyme]-L-cysteine + N(6)-ubiquitinyl-[acceptor protein]-L-lysine.. It participates in protein modification; protein ubiquitination. E3 ubiquitin-protein ligase which accepts ubiquitin from specific E2 ubiquitin-conjugating enzymes, and transfers it to substrates, generally promoting their degradation by the proteasome. Negatively regulates TCR (T-cell receptor), BCR (B-cell receptor) and FCER1 (high affinity immunoglobulin epsilon receptor) signal transduction pathways. In naive T-cells, inhibits VAV1 activation upon TCR engagement and imposes a requirement for CD28 costimulation for proliferation and IL-2 production. Also acts by promoting PIK3R1/p85 ubiquitination, which impairs its recruitment to the TCR and subsequent activation. In activated T-cells, inhibits PLCG1 activation and calcium mobilization upon restimulation and promotes anergy. In B-cells, acts by ubiquitinating SYK and promoting its proteasomal degradation. Slightly promotes SRC ubiquitination. May be involved in EGFR ubiquitination and internalization. May be functionally coupled with the E2 ubiquitin-protein ligase UB2D3. In association with CBL, required for proper feedback inhibition of ciliary platelet-derived growth factor receptor-alpha (PDGFRA) signaling pathway via ubiquitination and internalization of PDGFRA. This Rattus norvegicus (Rat) protein is E3 ubiquitin-protein ligase CBL-B (Cblb).